The following is a 1230-amino-acid chain: Myosin-1 (1230 aa).

Residues 1-32 are disordered; the sequence is MGISRRPKADKNASAADSAPGGKPNIQKAQFD. In terms of domain architecture, Myosin motor spans 39–713; sequence VGVSDLTLIS…TLFALEHMRD (675 aa). 132 to 139 lines the ATP pocket; it reads GESGAGKT. The interval 403-485 is actin-binding; it reads SIGILDIYGF…PGVFSAMKDA (83 aa). IQ domains lie at 717–737 and 738–763; these read HNMAARIQRVWRAFLQIRIEA and ATRIQRMFRKKREGKEFLELREKGHQ. One can recognise a TH1 domain in the interval 771 to 961; the sequence is RRRYSLLGSR…TIHTQAGEPP (191 aa). Disordered regions lie at residues 945 to 1018, 1033 to 1065, and 1116 to 1230; these read QDHY…AARP, TRNTSVQSTQSTRAVPPPPPPAPPAPPPAPVSK, and AYLE…EDDW. The segment covering 1033 to 1045 has biased composition (polar residues); the sequence is TRNTSVQSTQSTR. Composition is skewed to pro residues over residues 1047-1062 and 1122-1142; these read VPPPPPPAPPAPPPAP and TPPPPPPVATRPAPPPAPGPP. In terms of domain architecture, SH3 spans 1064–1123; it reads SKEPQYRVLYEFAGQSANEFSLKQGEIVTVLQKETNGWWLTKNVRGQGWAPTAYLEEVTP. Positions 1179–1214 are enriched in low complexity; that stretch reads RDSGMSISSNGSGNNSGRSTPTPSLAGGLAEALRAR.

This sequence belongs to the TRAFAC class myosin-kinesin ATPase superfamily. Myosin family.

Its subcellular location is the cytoplasm. The protein resides in the cytoskeleton. The protein localises to the actin patch. Type-I myosin implicated in the organization of the actin cytoskeleton. Required for proper actin cytoskeleton polarization. At the cell cortex, assembles in patch-like structures together with proteins from the actin-polymerizing machinery and promotes actin assembly. Functions as actin nucleation-promoting factor (NPF) for the Arp2/3 complex. The protein is Myosin-1 (myoA) of Sclerotinia sclerotiorum (strain ATCC 18683 / 1980 / Ss-1) (White mold).